The following is a 103-amino-acid chain: Urease subunit beta (103 aa).

The protein belongs to the urease beta subunit family. As to quaternary structure, heterotrimer of UreA (gamma), UreB (beta) and UreC (alpha) subunits. Three heterotrimers associate to form the active enzyme.

It is found in the cytoplasm. It carries out the reaction urea + 2 H2O + H(+) = hydrogencarbonate + 2 NH4(+). It functions in the pathway nitrogen metabolism; urea degradation; CO(2) and NH(3) from urea (urease route): step 1/1. The protein is Urease subunit beta of Streptomyces avermitilis (strain ATCC 31267 / DSM 46492 / JCM 5070 / NBRC 14893 / NCIMB 12804 / NRRL 8165 / MA-4680).